The primary structure comprises 360 residues: Aminomethyltransferase (360 aa).

The protein belongs to the GcvT family. The glycine cleavage system is composed of four proteins: P, T, L and H.

It carries out the reaction N(6)-[(R)-S(8)-aminomethyldihydrolipoyl]-L-lysyl-[protein] + (6S)-5,6,7,8-tetrahydrofolate = N(6)-[(R)-dihydrolipoyl]-L-lysyl-[protein] + (6R)-5,10-methylene-5,6,7,8-tetrahydrofolate + NH4(+). In terms of biological role, the glycine cleavage system catalyzes the degradation of glycine. The protein is Aminomethyltransferase of Legionella pneumophila subsp. pneumophila (strain Philadelphia 1 / ATCC 33152 / DSM 7513).